The sequence spans 398 residues: Transposase for insertion sequence element ISRM5 (398 aa).

It belongs to the transposase mutator family.

Its function is as follows. Required for the transposition of the insertion element. This is Transposase for insertion sequence element ISRM5 from Rhizobium meliloti (strain 1021) (Ensifer meliloti).